Reading from the N-terminus, the 211-residue chain is Pyridoxine/pyridoxamine 5'-phosphate oxidase (211 aa).

Residues 7–10 and Lys-65 each bind substrate; that span reads RRDY. Residues 60–65, 75–76, Arg-81, Lys-82, and Gln-104 contribute to the FMN site; these read RIVLLK and YT. 3 residues coordinate substrate: Tyr-122, Arg-126, and Ser-130. Residues 139 to 140 and Trp-184 contribute to the FMN site; that span reads QS. Position 190-192 (190-192) interacts with substrate; sequence RLH. An FMN-binding site is contributed by Arg-194.

This sequence belongs to the pyridoxamine 5'-phosphate oxidase family. As to quaternary structure, homodimer. FMN serves as cofactor.

The enzyme catalyses pyridoxamine 5'-phosphate + O2 + H2O = pyridoxal 5'-phosphate + H2O2 + NH4(+). It catalyses the reaction pyridoxine 5'-phosphate + O2 = pyridoxal 5'-phosphate + H2O2. Its pathway is cofactor metabolism; pyridoxal 5'-phosphate salvage; pyridoxal 5'-phosphate from pyridoxamine 5'-phosphate: step 1/1. It functions in the pathway cofactor metabolism; pyridoxal 5'-phosphate salvage; pyridoxal 5'-phosphate from pyridoxine 5'-phosphate: step 1/1. Functionally, catalyzes the oxidation of either pyridoxine 5'-phosphate (PNP) or pyridoxamine 5'-phosphate (PMP) into pyridoxal 5'-phosphate (PLP). The chain is Pyridoxine/pyridoxamine 5'-phosphate oxidase from Aliivibrio fischeri (strain ATCC 700601 / ES114) (Vibrio fischeri).